The sequence spans 214 residues: Putative ras-related protein Rab-5B (214 aa).

56–63 (GEMNTGKT) serves as a coordination point for GTP. An Effector region motif is present at residues 77 to 85 (TDSTIGAAF). GTP is bound by residues 103–107 (DTAGQ) and 161–164 (NKVD).

This sequence belongs to the small GTPase superfamily. Rab family. Post-translationally, this sequence lacks the C-terminal cysteine motifs subject to isoprenylation in other Rab proteins.

The sequence is that of Putative ras-related protein Rab-5B (rab5B) from Dictyostelium discoideum (Social amoeba).